The primary structure comprises 129 residues: Small ribosomal subunit protein uS11 (129 aa).

The protein belongs to the universal ribosomal protein uS11 family. As to quaternary structure, part of the 30S ribosomal subunit. Interacts with proteins S7 and S18. Binds to IF-3.

Functionally, located on the platform of the 30S subunit, it bridges several disparate RNA helices of the 16S rRNA. Forms part of the Shine-Dalgarno cleft in the 70S ribosome. This Yersinia enterocolitica serotype O:8 / biotype 1B (strain NCTC 13174 / 8081) protein is Small ribosomal subunit protein uS11.